The chain runs to 88 residues: Small ribosomal subunit protein uS17 (88 aa).

The protein belongs to the universal ribosomal protein uS17 family. As to quaternary structure, part of the 30S ribosomal subunit.

In terms of biological role, one of the primary rRNA binding proteins, it binds specifically to the 5'-end of 16S ribosomal RNA. The sequence is that of Small ribosomal subunit protein uS17 from Pseudomonas entomophila (strain L48).